A 364-amino-acid chain; its full sequence is Nucleosome assembly protein 1;2 (364 aa).

Residues 32 to 86 are a coiled coil; it reads VESIKNTLQGLAARHTDVLESLEPKVRKRVEVLREIQSQHDDLEAKFFEERAALE. A Nuclear export signal motif is present at residues 53–68; it reads LEPKVRKRVEVLREIQ. The Nuclear localization signal motif lies at 227–232; the sequence is KKKPKK. Disordered stretches follow at residues 250-269 and 301-364; these read FNFFSPPQVPDDDEEIDEDT and GEAA…CKQQ. Acidic residues-rich tracts occupy residues 259–269 and 304–340; these read PDDDEEIDEDT and AQDEDFEGIMDDEDDDDEDDDDDEDEDDEDDDEDDED. Cysteine methyl ester is present on Cys-361. A lipid anchor (S-farnesyl cysteine) is attached at Cys-361. A propeptide spans 362-364 (removed in mature form); sequence KQQ.

Belongs to the nucleosome assembly protein (NAP) family. In terms of assembly, binds preferentially histone H1 in vitro. As to expression, highly expressed in tissues exhibiting active cell-division activities, such as root and shoot meristems and young flowers.

It localises to the nucleus. The protein localises to the cytoplasm. In terms of biological role, may modulate chromatin structure by regulation of nucleosome assembly/disassembly. The polypeptide is Nucleosome assembly protein 1;2 (NAP1;2) (Oryza sativa subsp. indica (Rice)).